The primary structure comprises 319 residues: Acetyl-coenzyme A carboxylase carboxyl transferase subunit alpha (319 aa).

A CoA carboxyltransferase C-terminal domain is found at asparagine 35 to aspartate 296.

The protein belongs to the AccA family. In terms of assembly, acetyl-CoA carboxylase is a heterohexamer composed of biotin carboxyl carrier protein (AccB), biotin carboxylase (AccC) and two subunits each of ACCase subunit alpha (AccA) and ACCase subunit beta (AccD).

It localises to the cytoplasm. The catalysed reaction is N(6)-carboxybiotinyl-L-lysyl-[protein] + acetyl-CoA = N(6)-biotinyl-L-lysyl-[protein] + malonyl-CoA. Its pathway is lipid metabolism; malonyl-CoA biosynthesis; malonyl-CoA from acetyl-CoA: step 1/1. In terms of biological role, component of the acetyl coenzyme A carboxylase (ACC) complex. First, biotin carboxylase catalyzes the carboxylation of biotin on its carrier protein (BCCP) and then the CO(2) group is transferred by the carboxyltransferase to acetyl-CoA to form malonyl-CoA. This Cronobacter sakazakii (strain ATCC BAA-894) (Enterobacter sakazakii) protein is Acetyl-coenzyme A carboxylase carboxyl transferase subunit alpha.